We begin with the raw amino-acid sequence, 472 residues long: Citrate synthase, mitochondrial (472 aa).

Active-site residues include His308, His354, and Asp409.

This sequence belongs to the citrate synthase family. In terms of assembly, homodimer.

The protein localises to the mitochondrion matrix. It catalyses the reaction oxaloacetate + acetyl-CoA + H2O = citrate + CoA + H(+). The protein operates within carbohydrate metabolism; tricarboxylic acid cycle; isocitrate from oxaloacetate: step 1/2. This is Citrate synthase, mitochondrial (CS) from Daucus carota (Wild carrot).